The chain runs to 113 residues: U11-theraphotoxin-Hhn1d (113 aa).

The first 21 residues, 1–21, serve as a signal peptide directing secretion; it reads MNTVRVTFLLVFVVAVSLGQA. Residues 22–74 constitute a propeptide that is removed on maturation; sequence DKDENRMEMKDKTEQGKSYLHFAENLLLQKLEDVEAKLLEKDSEKSINSRQKR. 3 disulfide bridges follow: C75/C90, C82/C95, and C89/C110.

Belongs to the neurotoxin 14 (magi-1) family. 01 (HNTX-16) subfamily. In terms of tissue distribution, expressed by the venom gland.

It is found in the secreted. In terms of biological role, probable ion channel inhibitor. The protein is U11-theraphotoxin-Hhn1d of Cyriopagopus hainanus (Chinese bird spider).